Here is a 516-residue protein sequence, read N- to C-terminus: RxLR effector protein PITG_15127 (516 aa).

A signal peptide spans 1–22 (MRLYSGAILCTIATLLISVSTA). The RxLR-dEER signature appears at 48-63 (RFLRVSTQNTENGENR).

The protein belongs to the RxLR effector family.

It localises to the secreted. The protein resides in the host cell membrane. It is found in the host nucleus. Its subcellular location is the host cytoplasm. Effector that enhances P.infestans colonization of Nicotiana benthamiana leaves. The chain is RxLR effector protein PITG_15127 from Phytophthora infestans (strain T30-4) (Potato late blight agent).